A 1265-amino-acid chain; its full sequence is Protein transport protein SEC31 (1265 aa).

WD repeat units follow at residues 6–46 (EIAR…ELWD), 61–105 (TVDN…KTKD), 116–156 (KHTG…EPFA), 162–202 (TPMD…EVLH), 209–252 (GGRA…APEK), 256–296 (GHKK…KLGE), and 299–339 (TTAN…PSVS). The stretch at 380 to 403 (SFGFGSKLVIINTDSSGKSTVKVD) is one WD 8; interaction with SEC13 repeat. Basic and acidic residues predominate over residues 457 to 480 (KESLFEDANNDEKEATSPETKKEN). 3 disordered regions span residues 457 to 485 (KESL…EDDF), 765 to 784 (VKSS…GQTR), and 793 to 1163 (PAYA…IPEN). A compositionally biased stretch (pro residues) spans 794-810 (AYAPPVQAPPVQAPQPP). Composition is skewed to low complexity over residues 811–824 (LVQQ…QQQP), 865–875 (TPSSLSGTTSG), 901–931 (AKTA…FGSP), 939–951 (SQPG…SSAG), and 969–987 (SISR…TVPA). A compositionally biased stretch (polar residues) spans 1004–1023 (SDASQPPSSGFASPTLNSSP). Pro residues-rich tracts occupy residues 1062–1071 (YAPPKNPYAV) and 1083–1101 (APPP…PPQP).

This sequence belongs to the WD repeat SEC31 family. The COPII coat is composed of at least 5 proteins: the SEC23/24 complex, the SEC13/31 complex, and the protein SAR1. SEC13 and SEC31 make a 2:2 tetramer that forms the edge element of the COPII outer coat. The tetramer self-assembles in multiple copies to form the complete polyhedral cage. Interacts (via WD 8) with SEC13.

It is found in the cytoplasmic vesicle. It localises to the COPII-coated vesicle membrane. The protein localises to the endoplasmic reticulum membrane. Component of the coat protein complex II (COPII) which promotes the formation of transport vesicles from the endoplasmic reticulum (ER). The coat has two main functions, the physical deformation of the endoplasmic reticulum membrane into vesicles and the selection of cargo molecules. The chain is Protein transport protein SEC31 (PGA63) from Candida albicans (strain SC5314 / ATCC MYA-2876) (Yeast).